The primary structure comprises 74 residues: CLAVATA3/ESR (CLE)-related protein 1 (74 aa).

The first 22 residues, 1 to 22 (MANLKFLLCLFLICVSLSRSSA), serve as a signal peptide directing secretion. N-linked (GlcNAc...) asparagine glycosylation is present at asparagine 59. 2 positions are modified to hydroxyproline: proline 66 and proline 69. Proline 69 carries O-linked (Ara...) hydroxyproline glycosylation.

This sequence belongs to the CLV3/ESR signal peptide family. In terms of processing, the O-glycosylation (arabinosylation) of the hydroxyproline Pro-69 enhances binding affinity of the CLE1p peptide for its receptor. As to expression, mostly expressed in roots and seedlings, and, to a lower extent, in stems and apex.

The protein resides in the secreted. The protein localises to the extracellular space. Its function is as follows. Extracellular signal peptide that regulates cell fate. The polypeptide is CLAVATA3/ESR (CLE)-related protein 1 (Arabidopsis thaliana (Mouse-ear cress)).